The chain runs to 194 residues: MLEKEEIISPALEDLKNHYRSIITLLGEDAEREGLLKTPERVAKAMLTLTKGYHMDPHEVLRSAKFQEEYSQMVIVKDIDFFSLCEHHMLPFYGKAHVAYIPNGYITGLSKIARVVDIFSHRLQVQERMTLQIKECIQETLNPLGVMVVVEAKHMCMQMRGVEKQNSVTTTSDFTGAFNQAKTREEFMNLIRQR.

Residues cysteine 85, histidine 88, and cysteine 156 each coordinate Zn(2+).

This sequence belongs to the GTP cyclohydrolase I family. In terms of assembly, toroid-shaped homodecamer, composed of two pentamers of five dimers.

The catalysed reaction is GTP + H2O = 7,8-dihydroneopterin 3'-triphosphate + formate + H(+). It functions in the pathway cofactor biosynthesis; 7,8-dihydroneopterin triphosphate biosynthesis; 7,8-dihydroneopterin triphosphate from GTP: step 1/1. This Bacteroides fragilis (strain YCH46) protein is GTP cyclohydrolase 1.